A 136-amino-acid chain; its full sequence is Small ribosomal subunit protein uS8c (136 aa).

This sequence belongs to the universal ribosomal protein uS8 family. Part of the 30S ribosomal subunit.

Its subcellular location is the plastid. The protein resides in the chloroplast. In terms of biological role, one of the primary rRNA binding proteins, it binds directly to 16S rRNA central domain where it helps coordinate assembly of the platform of the 30S subunit. This is Small ribosomal subunit protein uS8c (rps8) from Saccharum officinarum (Sugarcane).